A 253-amino-acid chain; its full sequence is Amino-acid-binding protein AabA (253 aa).

Positions Met1–Cys23 are cleaved as a signal peptide.

Belongs to the bacterial solute-binding protein 3 family.

Its subcellular location is the periplasm. The chain is Amino-acid-binding protein AabA (aabA) from Dichelobacter nodosus (Bacteroides nodosus).